The sequence spans 286 residues: Phosphatidylserine decarboxylase proenzyme (286 aa).

Residues Asp88, His145, and Ser251 each act as charge relay system; for autoendoproteolytic cleavage activity in the active site. The active-site Schiff-base intermediate with substrate; via pyruvic acid; for decarboxylase activity is Ser251. Ser251 carries the pyruvic acid (Ser); by autocatalysis modification.

Belongs to the phosphatidylserine decarboxylase family. PSD-B subfamily. Prokaryotic type I sub-subfamily. Heterodimer of a large membrane-associated beta subunit and a small pyruvoyl-containing alpha subunit. Pyruvate serves as cofactor. Post-translationally, is synthesized initially as an inactive proenzyme. Formation of the active enzyme involves a self-maturation process in which the active site pyruvoyl group is generated from an internal serine residue via an autocatalytic post-translational modification. Two non-identical subunits are generated from the proenzyme in this reaction, and the pyruvate is formed at the N-terminus of the alpha chain, which is derived from the carboxyl end of the proenzyme. The autoendoproteolytic cleavage occurs by a canonical serine protease mechanism, in which the side chain hydroxyl group of the serine supplies its oxygen atom to form the C-terminus of the beta chain, while the remainder of the serine residue undergoes an oxidative deamination to produce ammonia and the pyruvoyl prosthetic group on the alpha chain. During this reaction, the Ser that is part of the protease active site of the proenzyme becomes the pyruvoyl prosthetic group, which constitutes an essential element of the active site of the mature decarboxylase.

The protein resides in the cell membrane. It catalyses the reaction a 1,2-diacyl-sn-glycero-3-phospho-L-serine + H(+) = a 1,2-diacyl-sn-glycero-3-phosphoethanolamine + CO2. Its pathway is phospholipid metabolism; phosphatidylethanolamine biosynthesis; phosphatidylethanolamine from CDP-diacylglycerol: step 2/2. In terms of biological role, catalyzes the formation of phosphatidylethanolamine (PtdEtn) from phosphatidylserine (PtdSer). This is Phosphatidylserine decarboxylase proenzyme from Verminephrobacter eiseniae (strain EF01-2).